Here is a 235-residue protein sequence, read N- to C-terminus: MQKPKYKRIMLKISGEALAGEKKLGLDTDTINEISRNIKEVYDLGVEIAIVVGGGNFWRGRSGKGMDRTTADYMGMLATVINALGLQDALESQGMPTRVQTAIEMRQIAEPYIRRKAVRHLEKKRIVIFACGTGNPFFSTDTTAALRAAEIDAEVILLAKKVDGVYDSDPNINPNAKKFDKLSFMDVINKGLGVMDSTAASLCKDNNIPIIVFGLNEPGNIVKAVMGEKIGTIVM.

An ATP-binding site is contributed by 12–15 (KISG). Position 54 (Gly54) interacts with UMP. ATP is bound by residues Gly55 and Arg59. UMP contacts are provided by residues Asp72 and 133–140 (TGNPFFST). ATP is bound by residues Tyr166 and Asp169.

It belongs to the UMP kinase family. As to quaternary structure, homohexamer.

The protein localises to the cytoplasm. The catalysed reaction is UMP + ATP = UDP + ADP. It functions in the pathway pyrimidine metabolism; CTP biosynthesis via de novo pathway; UDP from UMP (UMPK route): step 1/1. With respect to regulation, inhibited by UTP. In terms of biological role, catalyzes the reversible phosphorylation of UMP to UDP. The chain is Uridylate kinase from Acetivibrio thermocellus (strain ATCC 27405 / DSM 1237 / JCM 9322 / NBRC 103400 / NCIMB 10682 / NRRL B-4536 / VPI 7372) (Clostridium thermocellum).